A 283-amino-acid polypeptide reads, in one-letter code: HTH-type transcriptional activator RhaR (283 aa).

In terms of domain architecture, HTH araC/xylS-type spans 179–277 (DLLMAALGNS…GVTPRVWRQQ (99 aa)). 2 DNA-binding regions (H-T-H motif) span residues 196 to 217 (QHFC…RQQT) and 244 to 267 (ISEI…TRET).

As to quaternary structure, binds DNA as a dimer.

It localises to the cytoplasm. Its function is as follows. Activates expression of the rhaSR operon in response to L-rhamnose. The polypeptide is HTH-type transcriptional activator RhaR (Cronobacter sakazakii (strain ATCC BAA-894) (Enterobacter sakazakii)).